The primary structure comprises 320 residues: Olfactory receptor 5C1 (320 aa).

At 1–29 (MNSENLTRAAVAPAEFVLLGITNRWDLRV) the chain is on the extracellular side. Residue asparagine 5 is glycosylated (N-linked (GlcNAc...) asparagine). A helical transmembrane segment spans residues 30–50 (ALFLTCLPVYLVSLLGNMGMA). Residues 51–58 (LLIRMDAR) are Cytoplasmic-facing. A helical membrane pass occupies residues 59–79 (LHTPMYFFLANLSLLDACYSS). Residues 80–103 (AIGPKMLVDLLLPRATIPYTACAL) lie on the Extracellular side of the membrane. Residues cysteine 101 and cysteine 193 are joined by a disulfide bond. A helical membrane pass occupies residues 104–124 (QMFVFAGLADTECCLLAAMAY). Topologically, residues 125–143 (DRYVAIRNPLLYTTAMSQR) are cytoplasmic. Residues 144 to 164 (LCLALLGASGLGGAVSAFVHT) traverse the membrane as a helical segment. Residues 165 to 200 (TLTFRLSFCRSRKINSFFCDIPPLLAISCSDTSLNE) lie on the Extracellular side of the membrane. A helical transmembrane segment spans residues 201 to 221 (LLLFAICGFIQTATVLAITVS). The Cytoplasmic portion of the chain corresponds to 222–241 (YGFIAGAVIHMRSVEGSRRA). The chain crosses the membrane as a helical span at residues 242-262 (ASTGGSHLTAVAMMYGTLIFM). The Extracellular segment spans residues 263–275 (YLRPSSSYALDTD). Residues 276-296 (KMASVFYTLVIPSLNPLIYSL) form a helical membrane-spanning segment. Over 297-320 (RNKEVKEALRQTWSRFHCPGQGSQ) the chain is Cytoplasmic.

It belongs to the G-protein coupled receptor 1 family.

The protein localises to the cell membrane. In terms of biological role, odorant receptor. The polypeptide is Olfactory receptor 5C1 (OR5C1) (Homo sapiens (Human)).